The sequence spans 155 residues: Regulatory protein RecX (155 aa).

It belongs to the RecX family.

It localises to the cytoplasm. Modulates RecA activity. The chain is Regulatory protein RecX from Pseudomonas entomophila (strain L48).